Consider the following 107-residue polypeptide: U1-lycotoxin-Ls1e (107 aa).

A signal peptide spans 1 to 20 (MMKVLVVFALLVTLISYSSS). The propeptide occupies 21–41 (EGIDDLEADELLSLMANEQTR). Disulfide bonds link C44-C59, C51-C68, C58-C86, and C70-C84.

This sequence belongs to the neurotoxin 19 (CSTX) family. 04 (U1-Lctx) subfamily. As to expression, expressed by the venom gland.

It localises to the secreted. This Lycosa singoriensis (Wolf spider) protein is U1-lycotoxin-Ls1e.